Consider the following 356-residue polypeptide: Putative transposase y4zB (356 aa).

Residues 1–19 (MITTGTPTTRRSAAGTAGA) are compositionally biased toward low complexity. Disordered regions lie at residues 1 to 54 (MITT…PLAD) and 334 to 356 (PPPV…FAYV).

The protein belongs to the transposase 11 family.

In Sinorhizobium fredii (strain NBRC 101917 / NGR234), this protein is Putative transposase y4zB.